The primary structure comprises 83 residues: Mu-theraphotoxin-Hhn2c (83 aa).

An N-terminal signal peptide occupies residues 1 to 21; sequence MKASMFLALAGLVLLFVVGYA. Residues 22 to 48 constitute a propeptide that is removed on maturation; the sequence is SESEEKEFPIELLSKIFAVDVFKGEER. Disulfide bonds link cysteine 50–cysteine 65, cysteine 57–cysteine 70, and cysteine 64–cysteine 77. Leucine 81 is subject to Leucine amide.

This sequence belongs to the neurotoxin 10 (Hwtx-1) family. 15 (Hntx-3) subfamily. In terms of assembly, monomer. As to expression, expressed by the venom gland.

Its subcellular location is the secreted. Lethal neurotoxin. Selectively blocks tetrodotoxin-sensitive voltage-gated sodium channels (Nav). Does not affect tetrodotoxin-resistant voltage-gated sodium channels or calcium channels. The polypeptide is Mu-theraphotoxin-Hhn2c (Cyriopagopus hainanus (Chinese bird spider)).